Consider the following 841-residue polypeptide: Probable outer membrane usher protein EcpC (841 aa).

The N-terminal stretch at 1 to 29 (MPLRRFSPGLKAQFAFGMVFLFVQPDASA) is a signal peptide.

Belongs to the EcpC/MatD family.

Part of the ecpRABCDE operon, which encodes the E.coli common pilus (ECP). ECP is found in both commensal and pathogenic strains and plays a dual role in early-stage biofilm development and host cell recognition. This Escherichia coli O127:H6 (strain E2348/69 / EPEC) protein is Probable outer membrane usher protein EcpC (ecpC).